Consider the following 1268-residue polypeptide: Vigilin (1268 aa).

S2 carries the post-translational modification N-acetylserine. T8 is modified (phosphothreonine). S11 and S31 each carry phosphoserine. KH domains are found at residues 150 to 212 (QASA…RHEV), 222 to 284 (RAVE…VARI), 295 to 357 (TTTI…LTEV), 364 to 424 (FTVS…QEQI), 435 to 497 (MDYV…KREL), 507 to 570 (ERTK…TKYM), and 581 to 643 (SYSI…RSRI). Phosphothreonine occurs at positions 295 and 296. S317 carries the post-translational modification Phosphoserine. Y437 carries the phosphotyrosine modification. S645 carries the post-translational modification Phosphoserine. 7 consecutive KH domains span residues 653 to 716 (IAEV…KKQL), 727 to 790 (SFTV…QKEL), 800 to 863 (VVED…KKRI), 873 to 967 (QVTV…KEAL), 972 to 1034 (PVTI…KAGL), 1052 to 1117 (SFKL…RDAI), and 1127 to 1190 (MVSE…IDHI). Positions 910–947 (PDREENPVHSVEPSIQENGDEAGEGREAKETDPGSPRR) are disordered. Residues 932–947 (GEGREAKETDPGSPRR) show a composition bias toward basic and acidic residues. Residue K991 is modified to N6-acetyllysine. A disordered region spans residues 1213 to 1268 (PPAHEESRAPSKGFVVRDAPWTSNSSEKAPDMSSSEEFPSFGAQVAPKTLPWGPKR). Positions 1233-1249 (WTSNSSEKAPDMSSSEE) are enriched in polar residues. Residues S1247 and S1252 each carry the phosphoserine modification.

The protein localises to the cytoplasm. Its subcellular location is the nucleus. In terms of biological role, appears to play a role in cell sterol metabolism. It may function to protect cells from over-accumulation of cholesterol. The protein is Vigilin (Hdlbp) of Mus musculus (Mouse).